Here is a 358-residue protein sequence, read N- to C-terminus: Phosphoserine aminotransferase (358 aa).

Arg-41 provides a ligand contact to L-glutamate. Pyridoxal 5'-phosphate is bound by residues 75 to 76 (AS), Trp-100, Thr-148, Asp-167, and Gln-190. Lys-191 carries the post-translational modification N6-(pyridoxal phosphate)lysine. 233-234 (NT) contributes to the pyridoxal 5'-phosphate binding site.

It belongs to the class-V pyridoxal-phosphate-dependent aminotransferase family. SerC subfamily. Homodimer. It depends on pyridoxal 5'-phosphate as a cofactor.

It is found in the cytoplasm. The catalysed reaction is O-phospho-L-serine + 2-oxoglutarate = 3-phosphooxypyruvate + L-glutamate. It catalyses the reaction 4-(phosphooxy)-L-threonine + 2-oxoglutarate = (R)-3-hydroxy-2-oxo-4-phosphooxybutanoate + L-glutamate. The protein operates within amino-acid biosynthesis; L-serine biosynthesis; L-serine from 3-phospho-D-glycerate: step 2/3. Its pathway is cofactor biosynthesis; pyridoxine 5'-phosphate biosynthesis; pyridoxine 5'-phosphate from D-erythrose 4-phosphate: step 3/5. Functionally, catalyzes the reversible conversion of 3-phosphohydroxypyruvate to phosphoserine and of 3-hydroxy-2-oxo-4-phosphonooxybutanoate to phosphohydroxythreonine. The protein is Phosphoserine aminotransferase of Campylobacter jejuni subsp. doylei (strain ATCC BAA-1458 / RM4099 / 269.97).